A 144-amino-acid polypeptide reads, in one-letter code: Large ribosomal subunit protein uL15 (144 aa).

Residues 20–49 (GRGIGSGLGKTGGRGHKGQKSRSGGFHKVG) form a disordered region. The segment covering 21–31 (RGIGSGLGKTG) has biased composition (gly residues).

The protein belongs to the universal ribosomal protein uL15 family. As to quaternary structure, part of the 50S ribosomal subunit.

In terms of biological role, binds to the 23S rRNA. In Neisseria gonorrhoeae (strain ATCC 700825 / FA 1090), this protein is Large ribosomal subunit protein uL15.